We begin with the raw amino-acid sequence, 349 residues long: Sensory histidine kinase/phosphatase NtrB (349 aa).

The PAS domain maps to 5–78 (TQPDAGQILN…SLEAGQGFTD (74 aa)). In terms of domain architecture, Histidine kinase spans 136-349 (GLAHEIKNPL…EFSVYLPIRK (214 aa)). Histidine 139 is subject to Phosphohistidine; by autocatalysis. Lysine 329 is an ATP binding site.

In terms of processing, autophosphorylated.

Its subcellular location is the cytoplasm. It catalyses the reaction ATP + protein L-histidine = ADP + protein N-phospho-L-histidine.. Functionally, member of the two-component regulatory system NtrB/NtrC, which controls expression of the nitrogen-regulated (ntr) genes in response to nitrogen limitation. Under conditions of nitrogen limitation, NtrB autophosphorylates and transfers the phosphoryl group to NtrC. In the presence of nitrogen, acts as a phosphatase that dephosphorylates and inactivates NtrC. The sequence is that of Sensory histidine kinase/phosphatase NtrB (glnL) from Escherichia coli O157:H7.